The chain runs to 968 residues: Alanine--tRNA ligase, cytoplasmic (968 aa).

Met1 is modified (N-acetylmethionine). Residues Ser3 and Ser8 each carry the phosphoserine modification. Lys19 bears the N6-acetyllysine mark. ATP is bound by residues Arg77, His95, Trp176, and 214-216 (IWN). L-alanine contacts are provided by Asn216 and Asp239. ATP is bound at residue Gly243. 2 positions are modified to phosphoserine: Ser399 and Ser555. 4 residues coordinate Zn(2+): His605, His609, Cys723, and His727. Positions 750–763 (RRIVAVTGAEAQKA) match the Nuclear localization signal motif. Position 876 is an N6-acetyllysine (Lys876). N6,N6,N6-trimethyllysine; alternate is present on Lys943. Lys943 carries the post-translational modification N6,N6-dimethyllysine; alternate. An N6-methyllysine; alternate modification is found at Lys943.

The protein belongs to the class-II aminoacyl-tRNA synthetase family. In terms of assembly, monomer. Interacts with ANKRD16; the interaction is direct. Requires Zn(2+) as cofactor. Post-translationally, ISGylated. In terms of processing, methylation at 'Lys-943' by METTL21C.

It is found in the cytoplasm. The protein resides in the nucleus. The catalysed reaction is tRNA(Ala) + L-alanine + ATP = L-alanyl-tRNA(Ala) + AMP + diphosphate. It catalyses the reaction (S)-lactate + ATP + H(+) = (S)-lactoyl-AMP + diphosphate. It carries out the reaction (S)-lactoyl-AMP + L-lysyl-[protein] = N(6)-[(S)-lactoyl]-L-lysyl-[protein] + AMP + 2 H(+). Its activity is regulated as follows. The protein lactyltransferase activity is inhibited by beta-alanine. Functionally, catalyzes the attachment of alanine to tRNA(Ala) in a two-step reaction: alanine is first activated by ATP to form Ala-AMP and then transferred to the acceptor end of tRNA(Ala). Also edits incorrectly charged tRNA(Ala) via its editing domain. In presence of high levels of lactate, also acts as a protein lactyltransferase that mediates lactylation of lysine residues in target proteins, such as TEAD1, TP53/p53 and YAP1. Protein lactylation takes place in a two-step reaction: lactate is first activated by ATP to form lactate-AMP and then transferred to lysine residues of target proteins. Acts as an inhibitor of TP53/p53 activity by catalyzing lactylation of TP53/p53. Acts as a positive regulator of the Hippo pathway by mediating lactylation of TEAD1 and YAP1. The sequence is that of Alanine--tRNA ligase, cytoplasmic (AARS1) from Pongo abelii (Sumatran orangutan).